The following is a 127-amino-acid chain: Large ribosomal subunit protein bL21 (127 aa).

This sequence belongs to the bacterial ribosomal protein bL21 family. As to quaternary structure, part of the 50S ribosomal subunit. Contacts protein L20.

Functionally, this protein binds to 23S rRNA in the presence of protein L20. The polypeptide is Large ribosomal subunit protein bL21 (Synechococcus elongatus (strain ATCC 33912 / PCC 7942 / FACHB-805) (Anacystis nidulans R2)).